The primary structure comprises 478 residues: uncharacterized protein (478 aa).

An RCK N-terminal domain is found at 2 to 120 (MNMITVIGFG…NIDKIINILE (119 aa)).

This is an uncharacterized protein from Methanocaldococcus jannaschii (strain ATCC 43067 / DSM 2661 / JAL-1 / JCM 10045 / NBRC 100440) (Methanococcus jannaschii).